A 437-amino-acid polypeptide reads, in one-letter code: Chromosomal replication initiator protein DnaA (437 aa).

Positions 1 to 67 (MKNKIIASLK…KVVKDILGKD (67 aa)) are domain I, interacts with DnaA modulators. The domain II stretch occupies residues 67–97 (DATYEITFKEIPYETKVESGPLIKKRPLLIT). The domain III, AAA+ region stretch occupies residues 98 to 313 (PLNPKYTFEN…GAILRLIAYR (216 aa)). Positions 141, 143, 144, and 145 each coordinate ATP. A domain IV, binds dsDNA region spans residues 314–437 (NLYGTLNLSI…SKGFAQGESM (124 aa)).

It belongs to the DnaA family. Oligomerizes as a right-handed, spiral filament on DNA at oriC.

The protein resides in the cytoplasm. Functionally, plays an essential role in the initiation and regulation of chromosomal replication. ATP-DnaA binds to the origin of replication (oriC) to initiate formation of the DNA replication initiation complex once per cell cycle. Binds the DnaA box (a 9 base pair repeat at the origin) and separates the double-stranded (ds)DNA. Forms a right-handed helical filament on oriC DNA; dsDNA binds to the exterior of the filament while single-stranded (ss)DNA is stabiized in the filament's interior. The ATP-DnaA-oriC complex binds and stabilizes one strand of the AT-rich DNA unwinding element (DUE), permitting loading of DNA polymerase. After initiation quickly degrades to an ADP-DnaA complex that is not apt for DNA replication. Binds acidic phospholipids. This chain is Chromosomal replication initiator protein DnaA, found in Thermosipho melanesiensis (strain DSM 12029 / CIP 104789 / BI429).